The following is a 350-amino-acid chain: Holliday junction branch migration complex subunit RuvB (350 aa).

The segment at 1 to 182 is large ATPase domain (RuvB-L); sequence MEDRIVTPLN…FGVLCPMDFY (182 aa). ATP contacts are provided by residues Leu21, Arg22, Gly63, Lys66, Thr67, Thr68, 129–131, Arg172, Tyr182, and Arg219; that span reads EDY. Thr67 serves as a coordination point for Mg(2+). Residues 183–253 form a small ATPAse domain (RuvB-S) region; that stretch reads DQEELSEIVV…TSKAALELLE (71 aa). The head domain (RuvB-H) stretch occupies residues 256 to 350; sequence KEGFDSIDNK…KQSSLFDGEV (95 aa). Residues Arg311 and Arg316 each contribute to the DNA site.

It belongs to the RuvB family. As to quaternary structure, homohexamer. Forms an RuvA(8)-RuvB(12)-Holliday junction (HJ) complex. HJ DNA is sandwiched between 2 RuvA tetramers; dsDNA enters through RuvA and exits via RuvB. An RuvB hexamer assembles on each DNA strand where it exits the tetramer. Each RuvB hexamer is contacted by two RuvA subunits (via domain III) on 2 adjacent RuvB subunits; this complex drives branch migration. In the full resolvosome a probable DNA-RuvA(4)-RuvB(12)-RuvC(2) complex forms which resolves the HJ.

It localises to the cytoplasm. It carries out the reaction ATP + H2O = ADP + phosphate + H(+). Functionally, the RuvA-RuvB-RuvC complex processes Holliday junction (HJ) DNA during genetic recombination and DNA repair, while the RuvA-RuvB complex plays an important role in the rescue of blocked DNA replication forks via replication fork reversal (RFR). RuvA specifically binds to HJ cruciform DNA, conferring on it an open structure. The RuvB hexamer acts as an ATP-dependent pump, pulling dsDNA into and through the RuvAB complex. RuvB forms 2 homohexamers on either side of HJ DNA bound by 1 or 2 RuvA tetramers; 4 subunits per hexamer contact DNA at a time. Coordinated motions by a converter formed by DNA-disengaged RuvB subunits stimulates ATP hydrolysis and nucleotide exchange. Immobilization of the converter enables RuvB to convert the ATP-contained energy into a lever motion, pulling 2 nucleotides of DNA out of the RuvA tetramer per ATP hydrolyzed, thus driving DNA branch migration. The RuvB motors rotate together with the DNA substrate, which together with the progressing nucleotide cycle form the mechanistic basis for DNA recombination by continuous HJ branch migration. Branch migration allows RuvC to scan DNA until it finds its consensus sequence, where it cleaves and resolves cruciform DNA. The protein is Holliday junction branch migration complex subunit RuvB of Clostridium kluyveri (strain NBRC 12016).